Here is a 389-residue protein sequence, read N- to C-terminus: Galactokinase (389 aa).

34–37 (EHTD) is a binding site for substrate. ATP is bound by residues S68 and 125–131 (GSGLSSS). 2 residues coordinate Mg(2+): S131 and E163. D175 (proton acceptor) is an active-site residue. Residue Y225 coordinates substrate.

It belongs to the GHMP kinase family. GalK subfamily.

It is found in the cytoplasm. It carries out the reaction alpha-D-galactose + ATP = alpha-D-galactose 1-phosphate + ADP + H(+). Its pathway is carbohydrate metabolism; galactose metabolism. Catalyzes the transfer of the gamma-phosphate of ATP to D-galactose to form alpha-D-galactose-1-phosphate (Gal-1-P). This Clostridium beijerinckii (strain ATCC 51743 / NCIMB 8052) (Clostridium acetobutylicum) protein is Galactokinase.